The chain runs to 241 residues: LexA repressor (241 aa).

Positions 41–61 form a DNA-binding region, H-T-H motif; that stretch reads FREIGNAAGLKSPSSVKHQLQ. Residues Ser165 and Lys202 each act as for autocatalytic cleavage activity in the active site.

It belongs to the peptidase S24 family. In terms of assembly, homodimer.

The enzyme catalyses Hydrolysis of Ala-|-Gly bond in repressor LexA.. Its function is as follows. Represses a number of genes involved in the response to DNA damage (SOS response), including recA and lexA. In the presence of single-stranded DNA, RecA interacts with LexA causing an autocatalytic cleavage which disrupts the DNA-binding part of LexA, leading to derepression of the SOS regulon and eventually DNA repair. This chain is LexA repressor, found in Bifidobacterium longum subsp. infantis (strain ATCC 15697 / DSM 20088 / JCM 1222 / NCTC 11817 / S12).